A 559-amino-acid polypeptide reads, in one-letter code: 2-succinyl-5-enolpyruvyl-6-hydroxy-3-cyclohexene-1-carboxylate synthase (559 aa).

The protein belongs to the TPP enzyme family. MenD subfamily. Homodimer. Mg(2+) is required as a cofactor. Mn(2+) serves as cofactor. It depends on thiamine diphosphate as a cofactor.

The catalysed reaction is isochorismate + 2-oxoglutarate + H(+) = 5-enolpyruvoyl-6-hydroxy-2-succinyl-cyclohex-3-ene-1-carboxylate + CO2. Its pathway is quinol/quinone metabolism; 1,4-dihydroxy-2-naphthoate biosynthesis; 1,4-dihydroxy-2-naphthoate from chorismate: step 2/7. It participates in quinol/quinone metabolism; menaquinone biosynthesis. Catalyzes the thiamine diphosphate-dependent decarboxylation of 2-oxoglutarate and the subsequent addition of the resulting succinic semialdehyde-thiamine pyrophosphate anion to isochorismate to yield 2-succinyl-5-enolpyruvyl-6-hydroxy-3-cyclohexene-1-carboxylate (SEPHCHC). This is 2-succinyl-5-enolpyruvyl-6-hydroxy-3-cyclohexene-1-carboxylate synthase from Cytophaga hutchinsonii (strain ATCC 33406 / DSM 1761 / CIP 103989 / NBRC 15051 / NCIMB 9469 / D465).